A 226-amino-acid chain; its full sequence is DNA mismatch repair protein MutH (226 aa).

The protein belongs to the MutH family.

It localises to the cytoplasm. Its function is as follows. Sequence-specific endonuclease that cleaves unmethylated GATC sequences. It is involved in DNA mismatch repair. The chain is DNA mismatch repair protein MutH from Vibrio campbellii (strain ATCC BAA-1116).